The primary structure comprises 1274 residues: RNA-directed RNA polymerase VP2 (1274 aa).

Residues 561–798 enclose the RdRp catalytic domain; sequence LSTTSGSVVT…KLYALMGCRI (238 aa).

The protein belongs to the reoviridae RNA-directed RNA polymerase family.

The protein localises to the virion. It carries out the reaction RNA(n) + a ribonucleoside 5'-triphosphate = RNA(n+1) + diphosphate. In terms of biological role, RNA-directed RNA polymerase that is involved in transcription and genome replication. Following infection, it catalyzes the synthesis of fully conservative plus strands. After core assembly, which consists in recruitment of one capped plus-strand for each genomic segments and polymerase complexes, the polymerase switches mode and catalyzes the synthesis of complementary minus-strands. The sequence is that of RNA-directed RNA polymerase VP2 (S2) from Aquareovirus C (isolate Golden shiner/USA/GSRV/1977) (AQRV-C).